The chain runs to 200 residues: MAVRVSKAERQRLLREKINENPFYTDDELADMFGVSVQTIRLDRMELGIPEVRERIKNVAEENYRKVKTILGAEVVGELIDLELGKRGISIFEPTEDMVFVKTKIVKGQYIYSQAESLALSLIDAPAALIGVANIKYKYPVKVGDRLVAKAEVIRQRGNKYFVWVKIKVKEKEVFRGKFILVALEEDFLKKRSDTVEVGN.

Belongs to the FapR family.

Its function is as follows. Transcriptional factor involved in regulation of membrane lipid biosynthesis by repressing genes involved in fatty acid and phospholipid metabolism. This Caldanaerobacter subterraneus subsp. tengcongensis (strain DSM 15242 / JCM 11007 / NBRC 100824 / MB4) (Thermoanaerobacter tengcongensis) protein is Transcription factor FapR.